The primary structure comprises 261 residues: Probable membrane transporter protein XF_0764 (261 aa).

Helical transmembrane passes span 6-26 (LIVT…LGGG), 29-49 (ILAT…IAIG), 78-98 (VIFA…GMLI), 99-119 (DGQR…LLML), 150-170 (AASG…LIFA), 175-195 (TINA…ITTL), 205-225 (WTIA…GTLL), and 239-259 (VFGL…WASL).

This sequence belongs to the 4-toluene sulfonate uptake permease (TSUP) (TC 2.A.102) family.

The protein resides in the cell membrane. The polypeptide is Probable membrane transporter protein XF_0764 (Xylella fastidiosa (strain 9a5c)).